We begin with the raw amino-acid sequence, 225 residues long: Endonuclease V (225 aa).

Mg(2+) is bound by residues Asp43 and Asp110.

The protein belongs to the endonuclease V family. Mg(2+) serves as cofactor.

The protein localises to the cytoplasm. It catalyses the reaction Endonucleolytic cleavage at apurinic or apyrimidinic sites to products with a 5'-phosphate.. DNA repair enzyme involved in the repair of deaminated bases. Selectively cleaves double-stranded DNA at the second phosphodiester bond 3' to a deoxyinosine leaving behind the intact lesion on the nicked DNA. This is Endonuclease V from Thermotoga neapolitana (strain ATCC 49049 / DSM 4359 / NBRC 107923 / NS-E).